A 441-amino-acid chain; its full sequence is Methionine gamma-lyase (441 aa).

The tract at residues 1–25 (MAHFLETQEPLVFSGKKRNDRDDED) is disordered. Lys248 carries the post-translational modification N6-(pyridoxal phosphate)lysine.

Belongs to the trans-sulfuration enzymes family. In terms of assembly, homotetramer. The cofactor is pyridoxal 5'-phosphate. As to expression, expressed in roots, stems, siliques, leaves, flowers and seeds after imbibition (at protein level). Transcripts accumulate in dry mature seeds, but at protein level, only present upon imbibition.

It localises to the cytoplasm. The enzyme catalyses L-methionine + H2O = methanethiol + 2-oxobutanoate + NH4(+). In terms of biological role, catalyzes the degradation of L-methionine to alpha-ketobutyrate, methanethiol and ammonia. Exhibits a high activity toward L-methionine, L-ethionine, L-homocysteine and seleno-L-methionine, but not L-cysteine. Involved in an alternative cysteine biosynthesis pathway to the reverse trans-sulfuration pathway (methionine-&gt;homocysteine-&gt;cystathionine-&gt;cysteine) in which methanethiol is an intermediate. Also mediates an alternative isoleucine biosynthesis pathway in which 2-ketobutyrate is an intermediate. The sequence is that of Methionine gamma-lyase (MGL) from Arabidopsis thaliana (Mouse-ear cress).